Reading from the N-terminus, the 269-residue chain is LOB domain-containing protein 6 (269 aa).

An LOB domain is found at 37–138 (SPCAACKFLR…QDLARAKFEL (102 aa)).

This sequence belongs to the LOB domain-containing protein family.

It is found in the nucleus. Negative regulator of cell proliferation in the adaxial side of leaves. Regulates the formation of a symmetric lamina and the establishment of venation. This Oryza sativa subsp. indica (Rice) protein is LOB domain-containing protein 6 (LBD6).